We begin with the raw amino-acid sequence, 389 residues long: MEYKFGEYGGQYVPEVLMPSLKELEKAYKKYKDDPEFKEELEYYLKQYAGRETPLYFAENLTKKMGGAKIYLKREDLLLGGAHKINNSLGQALLAKRIGKTRIIAETGAGEHGLSTAMVGALFGLKAKIYMGAVDVERQKLNVYKMRLHGAEVHAVQSGSKTLKDAINEALRDWVETFEDTHYIIGSAVGPYPFPSMVRDFQSVIGKEAKKQILEAEGRLPDSIVACVGGGSNSIGIFNEFKQDKEVKLIGVEAAGEGLDTDRHGAAILKGKKGVLHGMLSKFLQDDDGQIAETYSISAGLDYPGVGPEHAYLDEIKRVEYAGITDVEALDAFSTLSKTEGIIPALESSHAVAHGMKIAKEMDKDEIIIINLSGRGDKDIHTVMNFIEF.

K84 carries the N6-(pyridoxal phosphate)lysine modification.

Belongs to the TrpB family. As to quaternary structure, tetramer of two alpha and two beta chains. The cofactor is pyridoxal 5'-phosphate.

It carries out the reaction (1S,2R)-1-C-(indol-3-yl)glycerol 3-phosphate + L-serine = D-glyceraldehyde 3-phosphate + L-tryptophan + H2O. Its pathway is amino-acid biosynthesis; L-tryptophan biosynthesis; L-tryptophan from chorismate: step 5/5. Functionally, the beta subunit is responsible for the synthesis of L-tryptophan from indole and L-serine. In Methanococcus aeolicus (strain ATCC BAA-1280 / DSM 17508 / OCM 812 / Nankai-3), this protein is Tryptophan synthase beta chain.